Reading from the N-terminus, the 477-residue chain is Aspartyl/glutamyl-tRNA(Asn/Gln) amidotransferase subunit B (477 aa).

This sequence belongs to the GatB/GatE family. GatB subfamily. Heterotrimer of A, B and C subunits.

It carries out the reaction L-glutamyl-tRNA(Gln) + L-glutamine + ATP + H2O = L-glutaminyl-tRNA(Gln) + L-glutamate + ADP + phosphate + H(+). The catalysed reaction is L-aspartyl-tRNA(Asn) + L-glutamine + ATP + H2O = L-asparaginyl-tRNA(Asn) + L-glutamate + ADP + phosphate + 2 H(+). In terms of biological role, allows the formation of correctly charged Asn-tRNA(Asn) or Gln-tRNA(Gln) through the transamidation of misacylated Asp-tRNA(Asn) or Glu-tRNA(Gln) in organisms which lack either or both of asparaginyl-tRNA or glutaminyl-tRNA synthetases. The reaction takes place in the presence of glutamine and ATP through an activated phospho-Asp-tRNA(Asn) or phospho-Glu-tRNA(Gln). This chain is Aspartyl/glutamyl-tRNA(Asn/Gln) amidotransferase subunit B, found in Thioalkalivibrio sulfidiphilus (strain HL-EbGR7).